The primary structure comprises 139 residues: Stress-related protein 1 (139 aa).

Positions 1 to 12 (MTSESSTPTGST) are enriched in polar residues. Positions 1-86 (MTSESSTPTG…AERPGSATTP (86 aa)) are disordered. Composition is skewed to low complexity over residues 14–53 (ALPA…SLVV) and 60–74 (SPVV…TRPR). Position 60 is a phosphoserine (S60).

In terms of tissue distribution, embryo.

Involved in drought, heat, cold, and/or salt tolerance. This Zea mays (Maize) protein is Stress-related protein 1 (SRP1).